The chain runs to 243 residues: Outer membrane protein A (243 aa).

A run of 5 beta stranded transmembrane segments spans residues 1–8 (LTAKLGYP), 13–21 (LDIYTRLGG), 48–57 (PVFAGGVEWA), 62–69 (IATRLEYQ), and 88–96 (LLSLGVSYR). 4 repeat units span residues 107–108 (AP), 109–110 (AP), 111–112 (AP), and 113–114 (AP). The tract at residues 107 to 114 (APAPAPAP) is 4 X 2 AA tandem repeats of A-P. An OmpA-like domain is found at 116–243 (VQTKHFTLKS…RRVEIEVKGI (128 aa)). An intrachain disulfide couples C217 to C229.

It belongs to the outer membrane OOP (TC 1.B.6) superfamily. OmpA family. As to quaternary structure, monomer and homodimer.

Its subcellular location is the cell outer membrane. Its function is as follows. With TolR probably plays a role in maintaining the position of the peptidoglycan cell wall in the periplasm. Acts as a porin with low permeability that allows slow penetration of small solutes; an internal gate slows down solute passage. In terms of biological role, required for conjugation with F-type plasmids; probably serves as the mating receptor on recipient cells. The protein is Outer membrane protein A of Escherichia fergusonii.